The following is a 383-amino-acid chain: 8-amino-7-oxononanoate synthase (383 aa).

R21 is a substrate binding site. G108–F109 serves as a coordination point for pyridoxal 5'-phosphate. Substrate is bound at residue H133. Pyridoxal 5'-phosphate is bound by residues S179, H207, and T233. K236 bears the N6-(pyridoxal phosphate)lysine mark. T350 provides a ligand contact to substrate.

This sequence belongs to the class-II pyridoxal-phosphate-dependent aminotransferase family. BioF subfamily. As to quaternary structure, homodimer. The cofactor is pyridoxal 5'-phosphate.

The enzyme catalyses 6-carboxyhexanoyl-[ACP] + L-alanine + H(+) = (8S)-8-amino-7-oxononanoate + holo-[ACP] + CO2. The protein operates within cofactor biosynthesis; biotin biosynthesis. In terms of biological role, catalyzes the decarboxylative condensation of pimeloyl-[acyl-carrier protein] and L-alanine to produce 8-amino-7-oxononanoate (AON), [acyl-carrier protein], and carbon dioxide. The polypeptide is 8-amino-7-oxononanoate synthase (Yersinia enterocolitica serotype O:8 / biotype 1B (strain NCTC 13174 / 8081)).